The chain runs to 180 residues: Cytokinin-beta-glucosidase 4 (180 aa).

Hydrolyzes cytokinin glucosides thus liberating free cytokinins. In Panax ginseng (Korean ginseng), this protein is Cytokinin-beta-glucosidase 4 (ROLC4).